The primary structure comprises 331 residues: Ribose-phosphate pyrophosphokinase (331 aa).

55–57 (DGE) lines the ATP pocket. H148 and D187 together coordinate Mg(2+). K211 is a catalytic residue. D-ribose 5-phosphate contacts are provided by residues R213, D237, and 241-245 (DTGGT).

It belongs to the ribose-phosphate pyrophosphokinase family. Class I subfamily. In terms of assembly, homohexamer. Mg(2+) is required as a cofactor.

It localises to the cytoplasm. The enzyme catalyses D-ribose 5-phosphate + ATP = 5-phospho-alpha-D-ribose 1-diphosphate + AMP + H(+). Its pathway is metabolic intermediate biosynthesis; 5-phospho-alpha-D-ribose 1-diphosphate biosynthesis; 5-phospho-alpha-D-ribose 1-diphosphate from D-ribose 5-phosphate (route I): step 1/1. Functionally, involved in the biosynthesis of the central metabolite phospho-alpha-D-ribosyl-1-pyrophosphate (PRPP) via the transfer of pyrophosphoryl group from ATP to 1-hydroxyl of ribose-5-phosphate (Rib-5-P). The protein is Ribose-phosphate pyrophosphokinase of Parasynechococcus marenigrum (strain WH8102).